Here is a 142-residue protein sequence, read N- to C-terminus: Large ribosomal subunit protein uL11 (142 aa).

Belongs to the universal ribosomal protein uL11 family. Part of the ribosomal stalk of the 50S ribosomal subunit. Interacts with L10 and the large rRNA to form the base of the stalk. L10 forms an elongated spine to which L12 dimers bind in a sequential fashion forming a multimeric L10(L12)X complex. One or more lysine residues are methylated.

In terms of biological role, forms part of the ribosomal stalk which helps the ribosome interact with GTP-bound translation factors. The protein is Large ribosomal subunit protein uL11 of Mycobacterium tuberculosis (strain ATCC 25177 / H37Ra).